The chain runs to 151 residues: Deoxyuridine 5'-triphosphate nucleotidohydrolase (151 aa).

Substrate-binding positions include 70 to 72, Asn83, 87 to 89, and Met97; these read RSG and LID.

It belongs to the dUTPase family. Requires Mg(2+) as cofactor.

The catalysed reaction is dUTP + H2O = dUMP + diphosphate + H(+). Its pathway is pyrimidine metabolism; dUMP biosynthesis; dUMP from dCTP (dUTP route): step 2/2. Its function is as follows. This enzyme is involved in nucleotide metabolism: it produces dUMP, the immediate precursor of thymidine nucleotides and it decreases the intracellular concentration of dUTP so that uracil cannot be incorporated into DNA. In Pseudomonas syringae pv. syringae (strain B728a), this protein is Deoxyuridine 5'-triphosphate nucleotidohydrolase.